The following is a 241-amino-acid chain: Probable WRKY transcription factor 63 (241 aa).

Residues 56–79 are disordered; the sequence is NSPNRQPHHESSSRDMAGLVPQRS. The segment at residues 97-165 is a DNA-binding region (WRKY); that stretch reads SPNPRLDDGF…YLGQHTCKAF (69 aa).

Belongs to the WRKY group III family.

The protein resides in the nucleus. Its function is as follows. Transcription factor. Interacts specifically with the W box (5'-(T)TGAC[CT]-3'), a frequently occurring elicitor-responsive cis-acting element. This is Probable WRKY transcription factor 63 (WRKY63) from Arabidopsis thaliana (Mouse-ear cress).